A 380-amino-acid chain; its full sequence is MRVLAALSGGVDSAVAAARAVDAGHDVVGVHMALSRTRAQHRTGSRGCCSIEDASDARRAADVLGIPFYVWDLSEEFTDTVVADFLSEYAAGRTPNPCVRCNEHIKFSALLDRGLALGFDAVATGHYARIERGAAGVPELHRAADAAKDQSYVLAVMGPERLARSLFPLGEVPTKDAVRAEAAARGLSVSAKPDSYDICFVADGDTQGFLRSHLGSQPGPVLDTDGREVGAHDGAYAFTVGQRKGLRLPRPAADGRPRYVVDVRTASNTVVVGPAELLSVRDVLGERPVWLAEEPHEWTDATVQVRAHGAALPARIRTVTDDDGASHLAARLAEPLRGLAAGQSVVAYDGTRVLGQATVAATGRDAVAAAPALAGVGSTA.

ATP contacts are provided by residues 6–13 and Met32; that span reads ALSGGVDS. Cys101 acts as the Nucleophile in catalysis. Cysteines 101 and 199 form a disulfide. Gly125 is an ATP binding site. Positions 148 to 150 are interaction with tRNA; that stretch reads KDQ. Residue Cys199 is the Cysteine persulfide intermediate of the active site.

This sequence belongs to the MnmA/TRMU family.

The protein localises to the cytoplasm. It carries out the reaction S-sulfanyl-L-cysteinyl-[protein] + uridine(34) in tRNA + AH2 + ATP = 2-thiouridine(34) in tRNA + L-cysteinyl-[protein] + A + AMP + diphosphate + H(+). Functionally, catalyzes the 2-thiolation of uridine at the wobble position (U34) of tRNA, leading to the formation of s(2)U34. This is tRNA-specific 2-thiouridylase MnmA from Beutenbergia cavernae (strain ATCC BAA-8 / DSM 12333 / CCUG 43141 / JCM 11478 / NBRC 16432 / NCIMB 13614 / HKI 0122).